The chain runs to 267 residues: Tryptophan synthase alpha chain (267 aa).

Active-site proton acceptor residues include Glu49 and Asp60.

This sequence belongs to the TrpA family. Tetramer of two alpha and two beta chains.

The enzyme catalyses (1S,2R)-1-C-(indol-3-yl)glycerol 3-phosphate + L-serine = D-glyceraldehyde 3-phosphate + L-tryptophan + H2O. It functions in the pathway amino-acid biosynthesis; L-tryptophan biosynthesis; L-tryptophan from chorismate: step 5/5. The alpha subunit is responsible for the aldol cleavage of indoleglycerol phosphate to indole and glyceraldehyde 3-phosphate. This is Tryptophan synthase alpha chain from Methylococcus capsulatus (strain ATCC 33009 / NCIMB 11132 / Bath).